Here is a 213-residue protein sequence, read N- to C-terminus: Hemolysin-3 homolog (213 aa).

A run of 7 helical transmembrane segments spans residues 11 to 31, 41 to 61, 75 to 95, 103 to 123, 127 to 147, 157 to 177, and 185 to 205; these read AITH…LIIF, IVSF…STLL, IIDH…FLLG, FTLL…KIFF, FILL…IAVK, GFSL…FYIW, and AIWH…VLFY.

Belongs to the UPF0073 (Hly-III) family.

It is found in the cell membrane. The polypeptide is Hemolysin-3 homolog (yplQ) (Bacillus subtilis (strain 168)).